Here is a 129-residue protein sequence, read N- to C-terminus: Phosphoribosyl-AMP cyclohydrolase (129 aa).

D76 serves as a coordination point for Mg(2+). C77 lines the Zn(2+) pocket. 2 residues coordinate Mg(2+): D78 and D80. Residues C97 and C104 each contribute to the Zn(2+) site.

It belongs to the PRA-CH family. Homodimer. Mg(2+) serves as cofactor. Zn(2+) is required as a cofactor.

The protein resides in the cytoplasm. It carries out the reaction 1-(5-phospho-beta-D-ribosyl)-5'-AMP + H2O = 1-(5-phospho-beta-D-ribosyl)-5-[(5-phospho-beta-D-ribosylamino)methylideneamino]imidazole-4-carboxamide. It functions in the pathway amino-acid biosynthesis; L-histidine biosynthesis; L-histidine from 5-phospho-alpha-D-ribose 1-diphosphate: step 3/9. Catalyzes the hydrolysis of the adenine ring of phosphoribosyl-AMP. In Albidiferax ferrireducens (strain ATCC BAA-621 / DSM 15236 / T118) (Rhodoferax ferrireducens), this protein is Phosphoribosyl-AMP cyclohydrolase.